Consider the following 409-residue polypeptide: Formyl-CoA:oxalate CoA-transferase (409 aa).

CoA is bound by residues Gln-17–Ser-18, Leu-71–Lys-74, Asn-95–Gly-97, Arg-103, and Lys-135–Glu-138. Asp-167 functions as the Nucleophile in the catalytic mechanism. The interval Leu-221–Pro-245 is disordered. Gly-242–Gln-244 is a binding site for substrate.

This sequence belongs to the CoA-transferase III family. Frc subfamily. As to quaternary structure, homodimer.

It carries out the reaction formyl-CoA + oxalate = oxalyl-CoA + formate. Its pathway is metabolic intermediate degradation; oxalate degradation; CO(2) and formate from oxalate: step 1/2. Functionally, involved in the catabolism of oxalate and in the adapatation to low pH via the induction of the oxalate-dependent acid tolerance response (ATR). Catalyzes the transfer of the CoA moiety from formyl-CoA to oxalate. This chain is Formyl-CoA:oxalate CoA-transferase, found in Streptomyces avermitilis (strain ATCC 31267 / DSM 46492 / JCM 5070 / NBRC 14893 / NCIMB 12804 / NRRL 8165 / MA-4680).